The chain runs to 487 residues: Arginine ADP-riboxanase CopC (487 aa).

A compositionally biased stretch (polar residues) spans 1–12; the sequence is MRVENHSPSLSK. The segment at 1-27 is disordered; sequence MRVENHSPSLSKLNPPEAGSGDPTAIG. His-137, Gln-138, Ser-139, Leu-143, Ala-150, Ala-152, Asn-154, and Leu-157 together coordinate NAD(+). His-137 provides a ligand contact to nicotinamide. Residues Ser-139 and Leu-143 each coordinate ADP-D-ribose. Residues Ala-152, Asn-154, Leu-157, Gly-166, Asn-167, Thr-168, and Phe-183 each contribute to the ADP-D-ribose site. NAD(+) is bound at residue Asn-167. Phe-183 contacts NAD(+). Nicotinamide contacts are provided by Phe-183, Phe-184, His-202, and Phe-207. His-202 lines the NAD(+) pocket. The ADP-D-ribose site is built by Phe-207 and Asp-230. NAD(+) is bound by residues Asp-230 and Glu-325. Glu-325 is a binding site for nicotinamide. Residue Glu-325 is part of the active site. ANK repeat units lie at residues 368–398 and 444–476; these read DAVT…EAGD and SGET…LLSE.

This sequence belongs to the OspC family. As to quaternary structure, interacts with host calmodulin (CALM1, CALM2 and/or CALM3); specifically interacts with the apo form of calmodulin and calmodulin-binding is required to mediate arginine ADP-riboxanation of host caspases.

Its subcellular location is the secreted. The protein localises to the host cytoplasm. The catalysed reaction is L-arginyl-[protein] + NAD(+) = ADP-riboxanated L-argininyl-[protein] + nicotinamide + NH4(+) + H(+). With respect to regulation, interaction with host calmodulin (CALM1, CALM2 and/or CALM3) is required to mediate arginine ADP-riboxanation of host caspases. Functionally, ADP-riboxanase effector that inhibits host cell programmed cell death. Acts by mediating arginine ADP-riboxanation of host caspases (CASP3, CASP7, CASP8 and CASP9), blocking their processing and activation. ADP-riboxanation of host apoptotic caspases (CASP3, CASP7, CASP8 and CASP9) prevents their activation, thereby inhibiting host cell apoptosis. ADP-riboxanation of host CASP8 also inhibits host cell necroptosis. ADP-riboxanation of host CASP3 also abolishes pyroptosis by preventing its ability to cleave GSDME. May also able to inactivate CASP4/CASP11, blocking inhibiting LPS-induced pyroptosis; however this activity is unsure in vivo. ADP-riboxanation takes place in several steps: CopC first binds host caspases and NAD(+); NAD(+) is hydrolyzed to nicotinamide and ADP-D-ribose. CopC then transfers the ADP-D-ribose to the modified arginine of caspases and forms the ADP-D-ribose-deacylization on arginine, leading to deamination to remove one N-omega group on target arginine. This Chromobacterium violaceum (strain ATCC 12472 / DSM 30191 / JCM 1249 / CCUG 213 / NBRC 12614 / NCIMB 9131 / NCTC 9757 / MK) protein is Arginine ADP-riboxanase CopC.